We begin with the raw amino-acid sequence, 355 residues long: Nuclear speckle splicing regulatory protein 1 homolog (355 aa).

The tract at residues 1 to 57 (MSGTGFRYGLNVMKKKKPNESSNRITFTEDDSSSSEQEHAPIPNSFSSQITAASDAS) is disordered. The span at 44–54 (NSFSSQITAAS) shows a compositional bias: polar residues. Residues 99–162 (MENLIESAKK…EDRKEEDEKS (64 aa)) adopt a coiled-coil conformation. Disordered regions lie at residues 253–292 (SANN…HGTY) and 325–355 (KIHA…ATNP). A compositionally biased stretch (basic and acidic residues) spans 280–289 (YHQDRPDKRH). The stretch at 293–326 (SLEEIDKQRKEFENRQRLQKEKEFQKSREAALKI) forms a coiled coil. Over residues 329 to 339 (SRNTTETQVQS) the composition is skewed to polar residues. Basic residues predominate over residues 346–355 (QRKKKAATNP).

Belongs to the NSRP1 family.

The sequence is that of Nuclear speckle splicing regulatory protein 1 homolog from Schizosaccharomyces pombe (strain 972 / ATCC 24843) (Fission yeast).